A 202-amino-acid polypeptide reads, in one-letter code: NADH-ubiquinone oxidoreductase chain 6 (202 aa).

5 consecutive transmembrane segments (helical) span residues 1 to 21 (MVTM…IMVI), 29 to 49 (SVFW…LLGV), 52 to 72 (IALM…LFVI), 96 to 116 (VPIG…SWLI), and 156 to 176 (YYLF…AIVL).

The protein belongs to the complex I subunit 6 family.

It is found in the mitochondrion membrane. It carries out the reaction a ubiquinone + NADH + 5 H(+)(in) = a ubiquinol + NAD(+) + 4 H(+)(out). Core subunit of the mitochondrial membrane respiratory chain NADH dehydrogenase (Complex I) that is believed to belong to the minimal assembly required for catalysis. Complex I functions in the transfer of electrons from NADH to the respiratory chain. The immediate electron acceptor for the enzyme is believed to be ubiquinone. The chain is NADH-ubiquinone oxidoreductase chain 6 (ND6) from Metridium senile (Brown sea anemone).